A 240-amino-acid polypeptide reads, in one-letter code: Peptidyl-tRNA hydrolase (240 aa).

Tyr14 provides a ligand contact to tRNA. His19 acts as the Proton acceptor in catalysis. Residues Phe64, Asn66, and Asn112 each contribute to the tRNA site. A disordered region spans residues 196 to 227; sequence EKPAQKQQPKQQSHIRQARSQQAPAKLPETGP. The segment covering 209–218 has biased composition (polar residues); it reads HIRQARSQQA.

It belongs to the PTH family. As to quaternary structure, monomer.

The protein localises to the cytoplasm. It catalyses the reaction an N-acyl-L-alpha-aminoacyl-tRNA + H2O = an N-acyl-L-amino acid + a tRNA + H(+). In terms of biological role, hydrolyzes ribosome-free peptidyl-tRNAs (with 1 or more amino acids incorporated), which drop off the ribosome during protein synthesis, or as a result of ribosome stalling. Its function is as follows. Catalyzes the release of premature peptidyl moieties from peptidyl-tRNA molecules trapped in stalled 50S ribosomal subunits, and thus maintains levels of free tRNAs and 50S ribosomes. This Mesorhizobium japonicum (strain LMG 29417 / CECT 9101 / MAFF 303099) (Mesorhizobium loti (strain MAFF 303099)) protein is Peptidyl-tRNA hydrolase.